We begin with the raw amino-acid sequence, 153 residues long: ATP synthase subunit b' (153 aa).

Residues 20 to 40 (TLPLMAVQVVLLTFILNALFF) traverse the membrane as a helical segment.

It belongs to the ATPase B chain family. In terms of assembly, F-type ATPases have 2 components, F(1) - the catalytic core - and F(0) - the membrane proton channel. F(1) has five subunits: alpha(3), beta(3), gamma(1), delta(1), epsilon(1). F(0) has four main subunits: a(1), b(1), b'(1) and c(10-14). The alpha and beta chains form an alternating ring which encloses part of the gamma chain. F(1) is attached to F(0) by a central stalk formed by the gamma and epsilon chains, while a peripheral stalk is formed by the delta, b and b' chains.

Its subcellular location is the cellular thylakoid membrane. Functionally, f(1)F(0) ATP synthase produces ATP from ADP in the presence of a proton or sodium gradient. F-type ATPases consist of two structural domains, F(1) containing the extramembraneous catalytic core and F(0) containing the membrane proton channel, linked together by a central stalk and a peripheral stalk. During catalysis, ATP synthesis in the catalytic domain of F(1) is coupled via a rotary mechanism of the central stalk subunits to proton translocation. Component of the F(0) channel, it forms part of the peripheral stalk, linking F(1) to F(0). The b'-subunit is a diverged and duplicated form of b found in plants and photosynthetic bacteria. This chain is ATP synthase subunit b', found in Prochlorococcus marinus (strain NATL1A).